The sequence spans 534 residues: Putative ammonium transporter 1 (534 aa).

11 consecutive transmembrane segments (helical) span residues 31-51 (SFFLCSMALIIFFMQCGFAYL), 69-89 (LLDSCICIIGYWAIGWALAYG), 115-135 (FFFQYVFSATAATIVSGAVAE), 139-159 (FITYVTYCTVISTFIYPVLTH), 184-204 (FAGSGLVHLCGGSISFLAAWI), 223-243 (ILGHSVPFTALGGFILMFGFL), 263-283 (ALAMINTILSGAFAALIYLGV), 291-311 (WTLLLTINACLSGMVAACAGC), 318-338 (ACIWVGLGAGLIYLAFSKLMI), 346-366 (LDAFAVHAGGGFWGLMSSSII), and 401-421 (ICALAIIAWSLGVMLPIFWIL).

This sequence belongs to the ammonia transporter channel (TC 1.A.11.2) family.

The protein localises to the membrane. Functionally, involved in the uptake of ammonia. The polypeptide is Putative ammonium transporter 1 (amt-1) (Caenorhabditis elegans).